The following is a 236-amino-acid chain: Sensory rhodopsin I (236 aa).

The next 7 helical transmembrane spans lie at 6–26 (VVYGITAAGFAVGVAIVGFLY), 37–57 (ILAALALIPGVAGISYVAMVF), 74–94 (YLDWVVTTPLLVGFIGYTAGA), 98–118 (AIFGVMAADALMILAGVGAVV), 126–146 (ALFGVSAVFHISLFAYLYLIF), 167–187 (VGLLWIAYPLVWLAGPEGLGF), and 192–212 (GVSITYAFLDLLAKVPYVYFF). Lys205 carries the post-translational modification N6-(retinylidene)lysine.

The protein belongs to the archaeal/bacterial/fungal opsin family. Interacts with Htr1. In terms of processing, the covalent binding of retinal to the apoprotein, bacterioopsin, generates bacteriorhodopsin.

The protein resides in the membrane. In terms of biological role, photoattractant rhodopsin. The protein is Sensory rhodopsin I (sop1) of Haloarcula marismortui (strain ATCC 43049 / DSM 3752 / JCM 8966 / VKM B-1809) (Halobacterium marismortui).